The sequence spans 192 residues: Elongation factor P (192 aa).

This sequence belongs to the elongation factor P family.

The protein resides in the cytoplasm. Its pathway is protein biosynthesis; polypeptide chain elongation. Involved in peptide bond synthesis. Stimulates efficient translation and peptide-bond synthesis on native or reconstituted 70S ribosomes in vitro. Probably functions indirectly by altering the affinity of the ribosome for aminoacyl-tRNA, thus increasing their reactivity as acceptors for peptidyl transferase. This chain is Elongation factor P, found in Borrelia hermsii (strain HS1 / DAH).